We begin with the raw amino-acid sequence, 407 residues long: tRNA(Ile2) 2-agmatinylcytidine synthetase TiaS (407 aa).

The protein belongs to the TiaS family.

It localises to the cytoplasm. It catalyses the reaction cytidine(34) in tRNA(Ile2) + agmatine + ATP + H2O = 2-agmatinylcytidine(34) in tRNA(Ile2) + AMP + 2 phosphate + 2 H(+). ATP-dependent agmatine transferase that catalyzes the formation of 2-agmatinylcytidine (agm2C) at the wobble position (C34) of tRNA(Ile2), converting the codon specificity from AUG to AUA. The protein is tRNA(Ile2) 2-agmatinylcytidine synthetase TiaS of Caldivirga maquilingensis (strain ATCC 700844 / DSM 13496 / JCM 10307 / IC-167).